The following is an 86-amino-acid chain: Large ribosomal subunit protein bL31B (86 aa).

This sequence belongs to the bacterial ribosomal protein bL31 family. Type B subfamily. In terms of assembly, part of the 50S ribosomal subunit.

In Chloroherpeton thalassium (strain ATCC 35110 / GB-78), this protein is Large ribosomal subunit protein bL31B.